The sequence spans 636 residues: Biosynthetic arginine decarboxylase (636 aa).

K101 is modified (N6-(pyridoxal phosphate)lysine). 286–296 (FDVGGGLAVDY) is a binding site for substrate.

It belongs to the Orn/Lys/Arg decarboxylase class-II family. SpeA subfamily. It depends on Mg(2+) as a cofactor. Requires pyridoxal 5'-phosphate as cofactor.

It carries out the reaction L-arginine + H(+) = agmatine + CO2. Its pathway is amine and polyamine biosynthesis; agmatine biosynthesis; agmatine from L-arginine: step 1/1. Catalyzes the biosynthesis of agmatine from arginine. The sequence is that of Biosynthetic arginine decarboxylase from Shewanella denitrificans (strain OS217 / ATCC BAA-1090 / DSM 15013).